The following is a 253-amino-acid chain: Indole-3-glycerol phosphate synthase (253 aa).

This sequence belongs to the TrpC family.

It catalyses the reaction 1-(2-carboxyphenylamino)-1-deoxy-D-ribulose 5-phosphate + H(+) = (1S,2R)-1-C-(indol-3-yl)glycerol 3-phosphate + CO2 + H2O. The protein operates within amino-acid biosynthesis; L-tryptophan biosynthesis; L-tryptophan from chorismate: step 4/5. The protein is Indole-3-glycerol phosphate synthase of Bacillus cereus (strain G9842).